We begin with the raw amino-acid sequence, 96 residues long: Putative pterin-4-alpha-carbinolamine dehydratase (96 aa).

This sequence belongs to the pterin-4-alpha-carbinolamine dehydratase family.

The enzyme catalyses (4aS,6R)-4a-hydroxy-L-erythro-5,6,7,8-tetrahydrobiopterin = (6R)-L-erythro-6,7-dihydrobiopterin + H2O. The protein is Putative pterin-4-alpha-carbinolamine dehydratase of Synechocystis sp. (strain ATCC 27184 / PCC 6803 / Kazusa).